Consider the following 188-residue polypeptide: Transmembrane protein 160 (188 aa).

Residues 1–96 (MGGGWWWARA…ISFMQSDMGR (96 aa)) constitute a mitochondrion transit peptide. Positions 24 to 52 (PPQRPRSGGARGSFAPGHGPRAGASPPPV) are disordered. Ser48 carries the post-translational modification Phosphoserine. 2 consecutive transmembrane segments (helical) span residues 102-122 (FFLL…VGLA) and 135-155 (AAVG…AVGL). The tract at residues 168–188 (PEDDGTASAEGPDEAGRPPPE) is disordered.

This sequence belongs to the TMEM160 family.

The protein resides in the mitochondrion inner membrane. This is Transmembrane protein 160 from Homo sapiens (Human).